The primary structure comprises 356 residues: uncharacterized protein (356 aa).

Positions 1–21 are cleaved as a signal peptide; the sequence is MKLITAPCRALLALPFCYAFS.

This is an uncharacterized protein from Escherichia coli (strain K12).